We begin with the raw amino-acid sequence, 292 residues long: Aquaporin-3 (292 aa).

Residues 1–24 (MGRQKELMNRCGEMLHIRYRLLRQ) lie on the Cytoplasmic side of the membrane. Residues 25–42 (ALAECLGTLILVMFGCGS) form a helical membrane-spanning segment. The Extracellular portion of the chain corresponds to 43–56 (VAQVVLSRGTHGGF). The helical transmembrane segment at 57–74 (LTINLAFGFAVTLAILVA) threads the bilayer. At 75-78 (GQVS) the chain is on the cytoplasmic side. An intramembrane region (discontinuously helical) is located at residues 79–92 (GAHLNPAVTFAMCF). An NPA 1 motif is present at residues 83-85 (NPA). Residues 93-100 (LAREPWIK) lie on the Cytoplasmic side of the membrane. Residues 101-121 (LPIYTLAQTLGAFLGAGIVFG) form a helical membrane-spanning segment. The Extracellular segment spans residues 122-159 (LYYDAIWAFAGNELVVSGPNGTAGIFATYPSGHLDMVN). N-linked (GlcNAc...) asparagine glycosylation occurs at N141. The helical transmembrane segment at 160–177 (GFFDQFIGTAALIVCVLA) threads the bilayer. Residues 178–189 (IVDPYNNPVPRG) lie on the Cytoplasmic side of the membrane. Residues 190–206 (LEAFTVGLVVLVIGTSM) form a helical membrane-spanning segment. Residues 207 to 210 (GFNS) are Extracellular-facing. Positions 211 to 224 (GYAVNPARDFGPRL) form an intramembrane region, discontinuously helical. The NPA 2 signature appears at 215-217 (NPA). Over 225–242 (FTALAGWGSEVFTTGQNW) the chain is Extracellular. Residues 243 to 264 (WWVPIVSPLLGSIGGVFVYQLM) traverse the membrane as a helical segment. Over 265–292 (IGCHLEQPPPSTEAENVKLAHMKHKEQI) the chain is Cytoplasmic.

Belongs to the MIP/aquaporin (TC 1.A.8) family. Homotetramer; each monomer provides an independent glycerol/water pore. Could also exist in other oligomeric states. Detected in kidney medulla and papilla, in collecting duct cells. Detected in colon.

The protein localises to the cell membrane. Its subcellular location is the basolateral cell membrane. It catalyses the reaction glycerol(in) = glycerol(out). The catalysed reaction is H2O(in) = H2O(out). The enzyme catalyses urea(in) = urea(out). It carries out the reaction H2O2(out) = H2O2(in). Its activity is regulated as follows. Channel activity is inhibited by mercury ions. Its function is as follows. Aquaglyceroporins form homotetrameric transmembrane channels, with each monomer independently mediating glycerol and water transport across the plasma membrane along their osmotic gradient. Could also be permeable to urea. Also participates in cell permeability to H2O2 and H2O2-mediated signaling. In skin, transports glycerol to the epidermis and stratum corneum, where it maintains hydration, elasticity, and supports lipid biosynthesis for barrier repair. In kidney, contributes to the reabsorption of water, helping the body maintain proper fluid balance. The protein is Aquaporin-3 of Rattus norvegicus (Rat).